Consider the following 694-residue polypeptide: Acetolactate synthase catalytic subunit, mitochondrial (694 aa).

Residues 1-42 constitute a mitochondrion transit peptide; the sequence is MLRSRQATNALRAVGQTRPLRSQTAVAFTQSLNKVPSNRRSE. Positions 45 to 58 are enriched in low complexity; sequence VATASSTASGAFNS. The interval 45–69 is disordered; sequence VATASSTASGAFNSQVRPTPSPTFN. A compositionally biased stretch (polar residues) spans 59-69; sequence QVRPTPSPTFN. Glutamate 140 is a thiamine diphosphate binding site. Residues arginine 242, 358–379, and 410–429 contribute to the FAD site; these read HGSAYANMAMQEADLIIALGGR and EIMPKNINKVVEATEAIVGD. Positions 505 to 585 are thiamine pyrophosphate binding; the sequence is QHQMWTAQHF…VKVIVLNNEE (81 aa). Mg(2+) is bound by residues aspartate 556, asparagine 583, and glutamate 585.

This sequence belongs to the TPP enzyme family. Homodimer. Mg(2+) serves as cofactor. The cofactor is thiamine diphosphate.

It localises to the mitochondrion. The catalysed reaction is 2 pyruvate + H(+) = (2S)-2-acetolactate + CO2. It carries out the reaction 2-oxobutanoate + pyruvate + H(+) = (S)-2-ethyl-2-hydroxy-3-oxobutanoate + CO2. It functions in the pathway amino-acid biosynthesis; L-isoleucine biosynthesis; L-isoleucine from 2-oxobutanoate: step 1/4. Its pathway is amino-acid biosynthesis; L-valine biosynthesis; L-valine from pyruvate: step 1/4. In terms of biological role, acetolactate synthase catalytic subunit, mitochondrial; part of the gene cluster that mediates the biosynthesis of chlorflavonin, a fungal flavonoid with acetolactate synthase inhibitory activity. Is not direcly involved in chlorflavonin biosynthesis but acts as a self-resistant protein that effectively confers chlorflavonin resistance to the native host. As a catalytic subunit of mitochondrial acetolactate synthase, catalyzes the first of a series of common steps in the biosynthesis of the branched-chain amino acids. Catalyzes the irreversible decarboxylation of pyruvate to a bound hydroxyethyl group that then condenses with either a second pyruvate molecule to form 2-acetolactate (AL) or with 2-ketobutyrate to form 2-aceto-2-hydroxybutyrate (AHB). The first product is the precursor for valine and leucine biosynthesis, while the second leads to isoleucine. The protein is Acetolactate synthase catalytic subunit, mitochondrial of Aspergillus candidus.